A 45-amino-acid polypeptide reads, in one-letter code: COP9 signalosome complex subunit 4 (45 aa).

This sequence belongs to the CSN4 family. As to quaternary structure, component of the CSN complex, probably composed of CSN1, CSN2, CSN3, CSN4, CSN5 (CSN5A or CSN5B), CSN6 (CSN6A or CSN6B), CSN7 and CSN8.

It is found in the cytoplasm. Its subcellular location is the nucleus. Functionally, component of the COP9 signalosome complex (CSN), a complex involved in various cellular and developmental processes such as photomorphogenesis and auxin and jasmonate responses. The CSN complex is an essential regulator of the ubiquitin (Ubl) conjugation pathway by mediating the deneddylation of the cullin subunits of SCF-type E3 ligase complexes, leading to decrease the Ubl ligase activity of SCF. It is involved in repression of photomorphogenesis in darkness by regulating the activity of COP1-containing Ubl ligase complexes. In Brassica oleracea (Wild cabbage), this protein is COP9 signalosome complex subunit 4 (CSN4).